The following is a 471-amino-acid chain: E3 SUMO-protein ligase EGR2 (471 aa).

Residues 127 to 143 (PASTTASSNVTSASPNP) show a composition bias toward low complexity. The tract at residues 127–177 (PASTTASSNVTSASPNPLATGPLGVCTMSQTQPDLDHLYSPPPPPPYSGCA) is disordered. Residue lysine 246 is modified to N6-acetyllysine; by EP300. Disordered stretches follow at residues 273-301 (GGPS…AAAA) and 313-336 (RPIL…RPYP). Residues 280–289 (TGPGASGGSE) are compositionally biased toward gly residues. C2H2-type zinc fingers lie at residues 335–359 (YPCP…IRIH), 365–387 (FQCR…IRTH), and 393–415 (FACD…TKIH). Residues 406–471 (DERKRHTKIH…GPCSSRTRTP (66 aa)) form a disordered region. Over residues 410-420 (RHTKIHLRQKE) the composition is skewed to basic residues. The segment covering 424–437 (SAPSSSVPAASTAS) has biased composition (low complexity).

The protein belongs to the EGR C2H2-type zinc-finger protein family. Interacts with HCFC1. Interacts with WWP2. Interacts with UBC9. Interacts with CITED1. Interacts (via phosphorylated form) with SFN. Ubiquitinated by WWP2 leading to proteasomal degradation. In terms of processing, acetylated at Lys-246. May be deacetylated by HDAC6, HDAC10 or SIRT1.

It localises to the nucleus. Its pathway is protein modification; protein sumoylation. Sequence-specific DNA-binding transcription factor. Plays a role in hindbrain segmentation by regulating the expression of a subset of homeobox containing genes and in Schwann cell myelination by regulating the expression of genes involved in the formation and maintenance of myelin. Binds to two EGR2-consensus sites EGR2A (5'-CTGTAGGAG-3') and EGR2B (5'-ATGTAGGTG-3') in the HOXB3 enhancer and promotes HOXB3 transcriptional activation. Binds to specific DNA sites located in the promoter region of HOXA4, HOXB2 and ERBB2. Regulates hindbrain segmentation by controlling the expression of Hox genes, such as HOXA4, HOXB3 and HOXB2, and thereby specifying odd and even rhombomeres. Promotes the expression of HOXB3 in the rhombomere r5 in the hindbrain. Regulates myelination in the peripheral nervous system after birth, possibly by regulating the expression of myelin proteins, such as MPZ, and by promoting the differentiation of Schwann cells. Involved in the development of the jaw openener musculature, probably by playing a role in its innervation through trigeminal motor neurons. May play a role in adipogenesis, possibly by regulating the expression of CEBPB. Functionally, E3 SUMO-protein ligase helping SUMO1 conjugation to its coregulators NAB1 and NAB2, whose sumoylation down-regulates EGR2 transcriptional activity. This Sus scrofa (Pig) protein is E3 SUMO-protein ligase EGR2 (EGR2).